Here is a 122-residue protein sequence, read N- to C-terminus: Proteasome assembly chaperone 3 (122 aa).

Methionine 1 is subject to N-acetylmethionine.

This sequence belongs to the PSMG3 family. Homodimer. Interacts directly with alpha and beta subunits of the 20S proteasome but dissociates before the formation of half-proteasomes, probably upon recruitment of POMP. Interacts with PSMG4.

In terms of biological role, chaperone protein which promotes assembly of the 20S proteasome. May cooperate with PSMG1-PSMG2 heterodimers to orchestrate the correct assembly of proteasomes. This Mus musculus (Mouse) protein is Proteasome assembly chaperone 3 (Psmg3).